The chain runs to 211 residues: Uracil phosphoribosyltransferase (211 aa).

30 to 34 contacts GTP; that stretch reads KGLVR. Residues Arg-79, Arg-104, and 133-141 contribute to the 5-phospho-alpha-D-ribose 1-diphosphate site; that span reads DPMLATGIT. Uracil-binding positions include Ile-197 and 202–204; that span reads GDA. Asp-203 provides a ligand contact to 5-phospho-alpha-D-ribose 1-diphosphate.

This sequence belongs to the UPRTase family. Requires Mg(2+) as cofactor.

The enzyme catalyses UMP + diphosphate = 5-phospho-alpha-D-ribose 1-diphosphate + uracil. It functions in the pathway pyrimidine metabolism; UMP biosynthesis via salvage pathway; UMP from uracil: step 1/1. Allosterically activated by GTP. In terms of biological role, catalyzes the conversion of uracil and 5-phospho-alpha-D-ribose 1-diphosphate (PRPP) to UMP and diphosphate. This chain is Uracil phosphoribosyltransferase, found in Pyrobaculum islandicum (strain DSM 4184 / JCM 9189 / GEO3).